Here is a 442-residue protein sequence, read N- to C-terminus: 3-phosphoshikimate 1-carboxyvinyltransferase (442 aa).

Residues Lys-25, Ser-26, and Arg-30 each coordinate 3-phosphoshikimate. Lys-25 contributes to the phosphoenolpyruvate binding site. Residues Gly-97 and Arg-125 each coordinate phosphoenolpyruvate. Positions 170, 171, 172, 323, and 350 each coordinate 3-phosphoshikimate. Position 172 (Gln-172) interacts with phosphoenolpyruvate. Catalysis depends on Asp-323, which acts as the Proton acceptor. Residues Arg-354 and Arg-399 each contribute to the phosphoenolpyruvate site.

Belongs to the EPSP synthase family. Monomer.

It is found in the cytoplasm. It catalyses the reaction 3-phosphoshikimate + phosphoenolpyruvate = 5-O-(1-carboxyvinyl)-3-phosphoshikimate + phosphate. The protein operates within metabolic intermediate biosynthesis; chorismate biosynthesis; chorismate from D-erythrose 4-phosphate and phosphoenolpyruvate: step 6/7. Functionally, catalyzes the transfer of the enolpyruvyl moiety of phosphoenolpyruvate (PEP) to the 5-hydroxyl of shikimate-3-phosphate (S3P) to produce enolpyruvyl shikimate-3-phosphate and inorganic phosphate. In Bartonella tribocorum (strain CIP 105476 / IBS 506), this protein is 3-phosphoshikimate 1-carboxyvinyltransferase.